A 458-amino-acid chain; its full sequence is Argininosuccinate lyase (458 aa).

The protein belongs to the lyase 1 family. Argininosuccinate lyase subfamily.

The protein resides in the cytoplasm. The catalysed reaction is 2-(N(omega)-L-arginino)succinate = fumarate + L-arginine. The protein operates within amino-acid biosynthesis; L-arginine biosynthesis; L-arginine from L-ornithine and carbamoyl phosphate: step 3/3. This Pelobacter propionicus (strain DSM 2379 / NBRC 103807 / OttBd1) protein is Argininosuccinate lyase.